We begin with the raw amino-acid sequence, 104 residues long: Large ribosomal subunit protein uL23 (104 aa).

Belongs to the universal ribosomal protein uL23 family. Part of the 50S ribosomal subunit. Contacts protein L29, and trigger factor when it is bound to the ribosome.

Functionally, one of the early assembly proteins it binds 23S rRNA. One of the proteins that surrounds the polypeptide exit tunnel on the outside of the ribosome. Forms the main docking site for trigger factor binding to the ribosome. The sequence is that of Large ribosomal subunit protein uL23 from Ralstonia nicotianae (strain ATCC BAA-1114 / GMI1000) (Ralstonia solanacearum).